The primary structure comprises 465 residues: Sodium-dependent phosphate transport protein 1 (465 aa).

3 N-linked (GlcNAc...) asparagine glycosylation sites follow: Asn-39, Asn-47, and Asn-56. 10 consecutive transmembrane segments (helical) span residues 79–99 (GLIL…VGYL), 117–137 (SLMS…VIVC), 176–196 (FVMG…LLGW), 199–219 (VFYI…FLFF), 260–280 (LPLW…SLLV), 304–324 (LPYL…DFFL), 337–356 (LFTT…LLYL), 363–383 (TVIF…GQLI), 399–419 (VTAL…GLIL), and 429–449 (KIFF…FLFA).

It belongs to the major facilitator superfamily. Sodium/anion cotransporter family. In terms of assembly, interacts with PDZK1. Kidney.

The protein localises to the apical cell membrane. The catalysed reaction is 3 Na(+)(out) + phosphate(out) = 3 Na(+)(in) + phosphate(in). It carries out the reaction urate(out) = urate(in). Functionally, important for the resorption of phosphate by the kidney. May be involved in actively transporting phosphate into cells via Na(+) cotransport in the renal brush border membrane. Plays a role in urate transport in the kidney. The protein is Sodium-dependent phosphate transport protein 1 (Slc17a1) of Mus musculus (Mouse).